The following is a 157-amino-acid chain: Transcription elongation factor GreA (157 aa).

Residues 46-67 (AEYHAARERQSFIEGRIKELED) adopt a coiled-coil conformation.

The protein belongs to the GreA/GreB family.

Functionally, necessary for efficient RNA polymerase transcription elongation past template-encoded arresting sites. The arresting sites in DNA have the property of trapping a certain fraction of elongating RNA polymerases that pass through, resulting in locked ternary complexes. Cleavage of the nascent transcript by cleavage factors such as GreA or GreB allows the resumption of elongation from the new 3'terminus. GreA releases sequences of 2 to 3 nucleotides. The polypeptide is Transcription elongation factor GreA (Rhodospirillum rubrum (strain ATCC 11170 / ATH 1.1.1 / DSM 467 / LMG 4362 / NCIMB 8255 / S1)).